The primary structure comprises 848 residues: DNA mismatch repair protein MutS (848 aa).

605 to 612 (GPNMAGKS) serves as a coordination point for ATP.

It belongs to the DNA mismatch repair MutS family.

This protein is involved in the repair of mismatches in DNA. It is possible that it carries out the mismatch recognition step. This protein has a weak ATPase activity. This is DNA mismatch repair protein MutS from Leptospira interrogans serogroup Icterohaemorrhagiae serovar Lai (strain 56601).